Consider the following 603-residue polypeptide: Terpenoid synthase 22 (603 aa).

Positions 356, 360, 500, and 508 each coordinate Mg(2+). The DDXXD motif signature appears at 356–360 (DDTCD).

This sequence belongs to the terpene synthase family. Tpsa subfamily. Mg(2+) is required as a cofactor. It depends on Mn(2+) as a cofactor. In terms of tissue distribution, predominantly expressed in siliques but also in flowers.

The protein localises to the cytoplasm. It participates in secondary metabolite biosynthesis; terpenoid biosynthesis. In terms of biological role, involved in terpene biosynthesis in roots. Possesses sesquiterpene (C15) synthase activity in vitro. Does not seem to be involved in diterpene (C20) biosynthesis. The sequence is that of Terpenoid synthase 22 from Arabidopsis thaliana (Mouse-ear cress).